Reading from the N-terminus, the 236-residue chain is UPF0257 lipoprotein YnfC (236 aa).

Residues 1 to 16 (MKYKLLPCLLAIFLTG) form the signal peptide. Cysteine 17 carries the N-palmitoyl cysteine lipid modification. Cysteine 17 is lipidated: S-diacylglycerol cysteine.

It belongs to the UPF0257 family.

The protein localises to the cell membrane. This Escherichia coli O7:K1 (strain IAI39 / ExPEC) protein is UPF0257 lipoprotein YnfC.